Here is a 248-residue protein sequence, read N- to C-terminus: MFAIISSAKTLNFEKLAPKTELTIPMFLTLTNKLLSTLQSYSENQLSKIMNISAKLAHINKERFKDFDNQESKAAIFAYAGDVFNNIHIEKLTNHALNFLQSHLLIISGLYGVLKPLDTIKPYRLEMATKLNEINLTNFWQDEVTNYINKILAKQENKYLLNLASQEYSSVINPNKLKYQLVNVHFKENRNGKLSTIGINAKKARGAMVKVIANNLIDSPELLKNFSYLGYAFSTKHSSDNELVFIKS.

The protein belongs to the UPF0246 family.

This chain is UPF0246 protein RPR_00055, found in Rickettsia peacockii (strain Rustic).